A 170-amino-acid polypeptide reads, in one-letter code: Keratin-associated protein 9-2 (170 aa).

Repeat copies occupy residues 8 to 12 (CCQPT), 13 to 17 (CCRTT), 18 to 22 (CCRTT), 37 to 41 (CCQPT), 42 to 46 (CCVSS), 51 to 55 (CCCPT), 61 to 65 (CCRTT), 66 to 70 (CCQPT), 75 to 79 (CYQPS), 80 to 84 (CCSTP), 85 to 89 (CCQPT), 90 to 94 (CCGSS), 95 to 99 (CCGQT), 140 to 144 (CCHPA), 145 to 149 (CCETT), 150 to 154 (CCRTT), and 164 to 168 (CCQPS). The 17 X 5 AA repeats of C-C-[RQVSGE]-[SPTQ]-[TASP] stretch occupies residues 8–168 (CCQPTCCRTT…TCVSSCCQPS (161 aa)).

The protein belongs to the KRTAP type 9 family. As to quaternary structure, interacts with hair keratins.

In the hair cortex, hair keratin intermediate filaments are embedded in an interfilamentous matrix, consisting of hair keratin-associated proteins (KRTAP), which are essential for the formation of a rigid and resistant hair shaft through their extensive disulfide bond cross-linking with abundant cysteine residues of hair keratins. The matrix proteins include the high-sulfur and high-glycine-tyrosine keratins. The chain is Keratin-associated protein 9-2 (KRTAP9-2) from Pan troglodytes (Chimpanzee).